We begin with the raw amino-acid sequence, 231 residues long: 5'-methylthioadenosine/S-adenosylhomocysteine nucleosidase (231 aa).

Glu12 functions as the Proton acceptor in the catalytic mechanism. Substrate is bound by residues Gly78, Met153, and Met174 to Glu175. Asp198 acts as the Proton donor in catalysis.

The protein belongs to the PNP/UDP phosphorylase family. MtnN subfamily.

The enzyme catalyses S-adenosyl-L-homocysteine + H2O = S-(5-deoxy-D-ribos-5-yl)-L-homocysteine + adenine. It carries out the reaction S-methyl-5'-thioadenosine + H2O = 5-(methylsulfanyl)-D-ribose + adenine. It catalyses the reaction 5'-deoxyadenosine + H2O = 5-deoxy-D-ribose + adenine. It participates in amino-acid biosynthesis; L-methionine biosynthesis via salvage pathway; S-methyl-5-thio-alpha-D-ribose 1-phosphate from S-methyl-5'-thioadenosine (hydrolase route): step 1/2. Functionally, catalyzes the irreversible cleavage of the glycosidic bond in both 5'-methylthioadenosine (MTA) and S-adenosylhomocysteine (SAH/AdoHcy) to adenine and the corresponding thioribose, 5'-methylthioribose and S-ribosylhomocysteine, respectively. Also cleaves 5'-deoxyadenosine, a toxic by-product of radical S-adenosylmethionine (SAM) enzymes, into 5-deoxyribose and adenine. This chain is 5'-methylthioadenosine/S-adenosylhomocysteine nucleosidase, found in Bacillus anthracis (strain A0248).